We begin with the raw amino-acid sequence, 229 residues long: Uracil-DNA glycosylase (229 aa).

Asp65 acts as the Proton acceptor in catalysis.

The protein belongs to the uracil-DNA glycosylase (UDG) superfamily. UNG family.

The protein localises to the cytoplasm. It carries out the reaction Hydrolyzes single-stranded DNA or mismatched double-stranded DNA and polynucleotides, releasing free uracil.. In terms of biological role, excises uracil residues from the DNA which can arise as a result of misincorporation of dUMP residues by DNA polymerase or due to deamination of cytosine. This chain is Uracil-DNA glycosylase, found in Latilactobacillus sakei subsp. sakei (strain 23K) (Lactobacillus sakei subsp. sakei).